We begin with the raw amino-acid sequence, 424 residues long: Adenosylmethionine-8-amino-7-oxononanoate aminotransferase (424 aa).

Residue Trp-46 participates in substrate binding. Pyridoxal 5'-phosphate is bound at residue 106–107 (GS). Tyr-138 contacts substrate. Asp-240 provides a ligand contact to pyridoxal 5'-phosphate. Substrate is bound by residues Lys-269 and Gly-303. N6-(pyridoxal phosphate)lysine is present on Lys-269. Residue 304 to 305 (HS) coordinates pyridoxal 5'-phosphate. Residue Arg-391 participates in substrate binding.

It belongs to the class-III pyridoxal-phosphate-dependent aminotransferase family. BioA subfamily. As to quaternary structure, homodimer. It depends on pyridoxal 5'-phosphate as a cofactor.

Its subcellular location is the cytoplasm. It carries out the reaction (8S)-8-amino-7-oxononanoate + S-adenosyl-L-methionine = S-adenosyl-4-methylsulfanyl-2-oxobutanoate + (7R,8S)-7,8-diammoniononanoate. Its pathway is cofactor biosynthesis; biotin biosynthesis; 7,8-diaminononanoate from 8-amino-7-oxononanoate (SAM route): step 1/1. In terms of biological role, catalyzes the transfer of the alpha-amino group from S-adenosyl-L-methionine (SAM) to 7-keto-8-aminopelargonic acid (KAPA) to form 7,8-diaminopelargonic acid (DAPA). It is the only aminotransferase known to utilize SAM as an amino donor. Complements a bioU deletion in Synechocystis PCC 6803. The chain is Adenosylmethionine-8-amino-7-oxononanoate aminotransferase from Synechococcus elongatus (strain ATCC 33912 / PCC 7942 / FACHB-805) (Anacystis nidulans R2).